A 768-amino-acid polypeptide reads, in one-letter code: Envelope glycoprotein gp160 (768 aa).

The N-terminal stretch at 1–16 is a signal peptide; the sequence is MTKFLGIFIVLGIGIG. The Extracellular segment spans residues 17 to 701; that stretch reads IGISTKQQWI…SWFDFSKWLN (685 aa). Asn-37 carries an N-linked (GlcNAc...) asparagine; by host glycan. Cysteines 44 and 57 form a disulfide. N-linked (GlcNAc...) asparagine; by host glycosylation is found at Asn-70, Asn-141, Asn-151, Asn-166, Asn-181, Asn-200, and Asn-211. 5 disulfide bridges follow: Cys-103–Cys-219, Cys-110–Cys-210, Cys-115–Cys-167, Cys-232–Cys-262, and Cys-242–Cys-254. A V1 region spans residues 115–166; sequence CVELKGSATSTPATSTTAGTKLPCVRNKTDSNLQSCNDTIIEKEMNDEAASN. The V2 stretch occupies residues 167-210; sequence CTFAMAGYIRDQKKNYSVVWNDAEIFCKRSTSHNGTKECYMIHC. N-linked (GlcNAc...) asparagine; by host glycosylation is found at Asn-256, Asn-267, Asn-277, Asn-283, Asn-295, Asn-307, Asn-317, Asn-374, Asn-415, Asn-490, and Asn-493. The V3 stretch occupies residues 312-344; sequence CKRPGNKTVLPVTIMAGLVFHSQKYNTRLRQAW. The cysteines at positions 312 and 345 are disulfide-linked. 2 disulfides stabilise this stretch: Cys-397/Cys-473 and Cys-404/Cys-446. The interval 404-446 is V4; sequence CKMDWFLNYLNNLTVDADHNHCKNNAGKGRSPGPCVQRTYVAC. Residues 489–496 form a V5 region; sequence QNRTNVTL. The tract at residues 539 to 559 is fusion peptide; it reads VPFVLGFLGFLGAAGTAMGAA. The tract at residues 602-618 is immunosuppression; it reads LNARVTALEKYLADQAR. Asn-646 and Asn-662 each carry an N-linked (GlcNAc...) asparagine; by host glycan. A coiled-coil region spans residues 650–687; the sequence is LEWEKQIEGLEGNITKQLEQAREQEEKNLDAYQKLSDW. Residues 683–704 form an MPER; binding to GalCer region; that stretch reads KLSDWSSFWSWFDFSKWLNILK. The chain crosses the membrane as a helical span at residues 702 to 722; the sequence is ILKIGFLAVIGVIGLRLLYTL. Residues 723–768 are Cytoplasmic-facing; the sequence is YTCIARVRQGYSPLSPQIHIHPWKGQPDNAGEPEEGGRTGKSKSTH. Residues 733–736 carry the YXXL motif; contains endocytosis signal motif; sequence YSPL. Positions 744–768 are disordered; sequence PWKGQPDNAGEPEEGGRTGKSKSTH.

As to quaternary structure, the mature envelope protein (Env) consists of a homotrimer of non-covalently associated gp120-gp41 heterodimers. The resulting complex protrudes from the virus surface as a spike. Interacts with host CD4 and CCR5. Gp120 also interacts with the C-type lectins CD209/DC-SIGN and CLEC4M/DC-SIGNR (collectively referred to as DC-SIGN(R)). The mature envelope protein (Env) consists of a homotrimer of non-covalently associated gp120-gp41 heterodimers. The resulting complex protrudes from the virus surface as a spike. Post-translationally, specific enzymatic cleavages in vivo yield mature proteins. Envelope glycoproteins are synthesized as an inactive precursor that is heavily N-glycosylated and processed likely by host cell furin in the Golgi to yield the mature SU and TM proteins. The cleavage site between SU and TM requires the minimal sequence [KR]-X-[KR]-R.

It localises to the virion membrane. It is found in the host cell membrane. Its subcellular location is the host endosome membrane. Its function is as follows. The surface protein gp120 (SU) attaches the virus to the host lymphoid cell by binding to the primary receptor CD4. This interaction induces a structural rearrangement creating a high affinity binding site for a chemokine coreceptor like CCR5. This peculiar 2 stage receptor-interaction strategy allows gp120 to maintain the highly conserved coreceptor-binding site in a cryptic conformation, protected from neutralizing antibodies. These changes are transmitted to the transmembrane protein gp41 and are thought to activate its fusogenic potential by unmasking its fusion peptide. Surface protein gp120 (SU) may target the virus to gut-associated lymphoid tissue (GALT) by binding host ITGA4/ITGB7 (alpha-4/beta-7 integrins), a complex that mediates T-cell migration to the GALT. Interaction between gp120 and ITGA4/ITGB7 would allow the virus to enter GALT early in the infection, infecting and killing most of GALT's resting CD4+ T-cells. This T-cell depletion is believed to be the major insult to the host immune system leading to AIDS. Functionally, the surface protein gp120 is a ligand for CD209/DC-SIGN and CLEC4M/DC-SIGNR, which are respectively found on dendritic cells (DCs), and on endothelial cells of liver sinusoids and lymph node sinuses. These interactions allow capture of viral particles at mucosal surfaces by these cells and subsequent transmission to permissive cells. DCs are professional antigen presenting cells, critical for host immunity by inducing specific immune responses against a broad variety of pathogens. They act as sentinels in various tissues where they take up antigen, process it, and present it to T-cells following migration to lymphoid organs. SIV subverts the migration properties of dendritic cells to gain access to CD4+ T-cells in lymph nodes. Virus transmission to permissive T-cells occurs either in trans (without DCs infection, through viral capture and transmission), or in cis (following DCs productive infection, through the usual CD4-gp120 interaction), thereby inducing a robust infection. In trans infection, bound virions remain infectious over days and it is proposed that they are not degraded, but protected in non-lysosomal acidic organelles within the DCs close to the cell membrane thus contributing to the viral infectious potential during DCs' migration from the periphery to the lymphoid tissues. On arrival at lymphoid tissues, intact virions recycle back to DCs' cell surface allowing virus transmission to CD4+ T-cells. Virion capture also seems to lead to MHC-II-restricted viral antigen presentation, and probably to the activation of SIV-specific CD4+ cells. In terms of biological role, the transmembrane protein gp41 (TM) acts as a class I viral fusion protein. Under the current model, the protein has at least 3 conformational states: pre-fusion native state, pre-hairpin intermediate state, and post-fusion hairpin state. During fusion of viral and target intracellular membranes, the coiled coil regions (heptad repeats) assume a trimer-of-hairpins structure, positioning the fusion peptide in close proximity to the C-terminal region of the ectodomain. The formation of this structure appears to drive apposition and subsequent fusion of viral and target cell membranes. Complete fusion occurs in host cell endosomes. The virus undergoes clathrin-dependent internalization long before endosomal fusion, thus minimizing the surface exposure of conserved viral epitopes during fusion and reducing the efficacy of inhibitors targeting these epitopes. Membranes fusion leads to delivery of the nucleocapsid into the cytoplasm. Its function is as follows. The envelope glycoprotein gp160 precursor down-modulates cell surface CD4 antigen by interacting with it in the endoplasmic reticulum and blocking its transport to the cell surface. The gp120-gp41 heterodimer allows rapid transcytosis of the virus through CD4 negative cells such as simple epithelial monolayers of the intestinal, rectal and endocervical epithelial barriers. Both gp120 and gp41 specifically recognize glycosphingolipids galactosyl-ceramide (GalCer) or 3' sulfo-galactosyl-ceramide (GalS) present in the lipid rafts structures of epithelial cells. Binding to these alternative receptors allows the rapid transcytosis of the virus through the epithelial cells. This transcytotic vesicle-mediated transport of virions from the apical side to the basolateral side of the epithelial cells does not involve infection of the cells themselves. This chain is Envelope glycoprotein gp160 (env), found in Simian immunodeficiency virus agm.vervet (isolate AGM155) (SIV-agm.ver).